The following is a 430-amino-acid chain: MTSVVVVGTQWGDEGKGKITDFLSADAEVIARYQGGDNAGHTIVIDGKKFKLHLIPSGIFFPQKISVIGNGVVVNPKSLVKELAYLHDEGVTTDNLRISDRAHVILPYHIQLDQLQEDAKGDNKIGTTIKGIGPAYMDKAARVGIRIADLLDKDIFAERLRINLAEKNRLFEKMYDSTPLDFDAIFEEYYAYGQEIKQYVTDTSVILNDALDAGKRVLFEGAQGVMLDIDQGTYPFVTSSNPVAGGVTIGSGVGPSKINKVVGVCKAYTSRVGDGPFPTELFDEVGERIREVGHEYGTTTGRPRRVGWFDSVVMRHSRRVSGITNLSLNSIDVLSGLDTVKICVAYDLDGERIDHYPASLEQLKRCKPIYEELPGWQEDITGVRSLDELPENARNYVRRVGELVGVRISTFSVGPGREQTNILESVWASI.

GTP-binding positions include 12–18 (GDEGKGK) and 40–42 (GHT). The active-site Proton acceptor is Asp-13. Residues Asp-13 and Gly-40 each coordinate Mg(2+). IMP-binding positions include 13-16 (DEGK), 38-41 (NAGH), Thr-128, Arg-142, Gln-223, Thr-238, and Arg-302. Residue His-41 is the Proton donor of the active site. Position 298-304 (298-304 (TTTGRPR)) interacts with substrate. GTP-binding positions include Arg-304, 330–332 (SID), and 412–414 (SVG).

Belongs to the adenylosuccinate synthetase family. Homodimer. The cofactor is Mg(2+).

It is found in the cytoplasm. The catalysed reaction is IMP + L-aspartate + GTP = N(6)-(1,2-dicarboxyethyl)-AMP + GDP + phosphate + 2 H(+). The protein operates within purine metabolism; AMP biosynthesis via de novo pathway; AMP from IMP: step 1/2. Functionally, plays an important role in the de novo pathway of purine nucleotide biosynthesis. Catalyzes the first committed step in the biosynthesis of AMP from IMP. In Streptococcus pyogenes serotype M49 (strain NZ131), this protein is Adenylosuccinate synthetase.